The following is a 552-amino-acid chain: Glutamate--tRNA ligase (552 aa).

The 'HIGH' region signature appears at 41 to 51 (PSPTGFQHIGG). The short motif at 293–297 (KLSKR) is the 'KMSKS' region element. K296 contributes to the ATP binding site.

Belongs to the class-I aminoacyl-tRNA synthetase family. Glutamate--tRNA ligase type 1 subfamily. Monomer.

It is found in the cytoplasm. It catalyses the reaction tRNA(Glu) + L-glutamate + ATP = L-glutamyl-tRNA(Glu) + AMP + diphosphate. Catalyzes the attachment of glutamate to tRNA(Glu) in a two-step reaction: glutamate is first activated by ATP to form Glu-AMP and then transferred to the acceptor end of tRNA(Glu). The sequence is that of Glutamate--tRNA ligase from Clostridium perfringens (strain SM101 / Type A).